The sequence spans 182 residues: ATP synthase subunit delta (182 aa).

The protein belongs to the ATPase delta chain family. F-type ATPases have 2 components, F(1) - the catalytic core - and F(0) - the membrane proton channel. F(1) has five subunits: alpha(3), beta(3), gamma(1), delta(1), epsilon(1). F(0) has three main subunits: a(1), b(2) and c(10-14). The alpha and beta chains form an alternating ring which encloses part of the gamma chain. F(1) is attached to F(0) by a central stalk formed by the gamma and epsilon chains, while a peripheral stalk is formed by the delta and b chains.

The protein resides in the cell inner membrane. Functionally, f(1)F(0) ATP synthase produces ATP from ADP in the presence of a proton or sodium gradient. F-type ATPases consist of two structural domains, F(1) containing the extramembraneous catalytic core and F(0) containing the membrane proton channel, linked together by a central stalk and a peripheral stalk. During catalysis, ATP synthesis in the catalytic domain of F(1) is coupled via a rotary mechanism of the central stalk subunits to proton translocation. This protein is part of the stalk that links CF(0) to CF(1). It either transmits conformational changes from CF(0) to CF(1) or is implicated in proton conduction. The sequence is that of ATP synthase subunit delta from Pseudothermotoga lettingae (strain ATCC BAA-301 / DSM 14385 / NBRC 107922 / TMO) (Thermotoga lettingae).